The sequence spans 384 residues: Outer membrane protein assembly factor BamC (384 aa).

The first 23 residues, 1–23, serve as a signal peptide directing secretion; it reads MNKLNSVVVARGAVAVLLIGLAG. Cys24 carries the N-palmitoyl cysteine lipid modification. Cys24 carries S-diacylglycerol cysteine lipidation. 2 disordered regions span residues 47–70 and 251–273; these read LEVP…TSGK and QAAQ…SGTL.

The protein belongs to the BamC family. As to quaternary structure, part of the Bam complex.

Its subcellular location is the cell outer membrane. Functionally, part of the outer membrane protein assembly complex, which is involved in assembly and insertion of beta-barrel proteins into the outer membrane. This Accumulibacter regalis protein is Outer membrane protein assembly factor BamC.